We begin with the raw amino-acid sequence, 297 residues long: Phosphate import ATP-binding protein PstB (297 aa).

Positions 50–292 constitute an ABC transporter domain; the sequence is MRLRDVEVFY…PEHDLTEAYI (243 aa). 82–89 contacts ATP; sequence GPSGCGKS.

It belongs to the ABC transporter superfamily. Phosphate importer (TC 3.A.1.7) family. As to quaternary structure, the complex is composed of two ATP-binding proteins (PstB), two transmembrane proteins (PstC and PstA) and a solute-binding protein (PstS).

The protein localises to the cell inner membrane. It catalyses the reaction phosphate(out) + ATP + H2O = ADP + 2 phosphate(in) + H(+). Part of the ABC transporter complex PstSACB involved in phosphate import. Responsible for energy coupling to the transport system. The sequence is that of Phosphate import ATP-binding protein PstB from Alcanivorax borkumensis (strain ATCC 700651 / DSM 11573 / NCIMB 13689 / SK2).